The chain runs to 564 residues: Solute carrier family 22 member 21 (564 aa).

At 1–20 (MLDYDEVTAFLGEWGTFQRL) the chain is on the cytoplasmic side. A helical membrane pass occupies residues 21 to 41 (IFFLLSASIIPNGFTGLSAVF). The Extracellular segment spans residues 42-142 (LTAIPEHRCR…DLVCKDDWKA (101 aa)). Residues N57, N64, and N91 are each glycosylated (N-linked (GlcNAc...) asparagine). Residues 143-163 (PLTTSFFYVGVLLGSFISGQL) traverse the membrane as a helical segment. Topologically, residues 164–172 (SDRFGRKNI) are cytoplasmic. A helical membrane pass occupies residues 173 to 193 (LFLTMAMHTGFSFIQVFSVNF). Residues 194 to 197 (EMFT) are Extracellular-facing. The chain crosses the membrane as a helical span at residues 198 to 218 (LLYTLVGMGHISNYVAAFVLG). Position 218 to 225 (218 to 225 (GTEMLSKS)) interacts with ATP. The Cytoplasmic portion of the chain corresponds to 219 to 232 (TEMLSKSVRIIFAT). A helical transmembrane segment spans residues 233–253 (LGVCIFFAFGFMVLPLFAYFI). Over 254 to 257 (REWR) the chain is Extracellular. A helical transmembrane segment spans residues 258–278 (RLLLAITLPGVLCGALWWFIP). Topologically, residues 279-344 (ESPRWLISQG…YDLVRTPNIR (66 aa)) are cytoplasmic. The chain crosses the membrane as a helical span at residues 345-365 (ILTIMSIILWLTISVGYFGLS). Topologically, residues 366–376 (LDTPNLNGNIY) are extracellular. A helical membrane pass occupies residues 377 to 397 (VNCFLLAAVEVPAYVLAWLLL). At 398-409 (QHVSRRYSMAGS) the chain is on the cytoplasmic side. The helical transmembrane segment at 410–430 (LFLGGSVLLLVQLVPSDLHYL) threads the bilayer. The Extracellular segment spans residues 431–433 (STT). Residues 434–454 (LVMVGKFGITSAYSMVYVYTA) form a helical membrane-spanning segment. At 455-465 (ELYPTVVRNMG) the chain is on the cytoplasmic side. Residues 466 to 486 (VGVSSTASRLGSILSPYFVYL) traverse the membrane as a helical segment. Topologically, residues 487-491 (GAYDR) are extracellular. The chain crosses the membrane as a helical span at residues 492-512 (RLPYILMGSLTILTAIITLFF). Over 513 to 564 (PESSGVSLPETIDEMQKVKKLKQRQSLSKKGSPKESKGNVSRTSRTSEPKGF) the chain is Cytoplasmic. A disordered region spans residues 532-564 (KLKQRQSLSKKGSPKESKGNVSRTSRTSEPKGF).

Belongs to the major facilitator (TC 2.A.1) superfamily. Organic cation transporter (TC 2.A.1.19) family. In terms of tissue distribution, predominantly expressed in testis.

The protein localises to the peroxisome membrane. Functionally, sodium-ion independent, medium affinity carnitine transporter. Also transports organic cations such as tetraethylammonium (TEA) without the involvement of sodium. Relative uptake activity ratio of carnitine to TEA is 746. This chain is Solute carrier family 22 member 21 (Slc22a21), found in Mus musculus (Mouse).